The sequence spans 159 residues: NADH-quinone oxidoreductase subunit I (159 aa).

4Fe-4S ferredoxin-type domains are found at residues 51–80 (RRYENGEERCIACKLCEAICPAQAIVIEAD) and 90–119 (TRYDIDMTKCIYCGLCQEACPVDAIVEGPN). Positions 60, 63, 66, 70, 99, 102, 105, and 109 each coordinate [4Fe-4S] cluster.

Belongs to the complex I 23 kDa subunit family. As to quaternary structure, NDH-1 is composed of 14 different subunits. Subunits NuoA, H, J, K, L, M, N constitute the membrane sector of the complex. [4Fe-4S] cluster serves as cofactor.

The protein resides in the cell membrane. The enzyme catalyses a quinone + NADH + 5 H(+)(in) = a quinol + NAD(+) + 4 H(+)(out). Its function is as follows. NDH-1 shuttles electrons from NADH, via FMN and iron-sulfur (Fe-S) centers, to quinones in the respiratory chain. The immediate electron acceptor for the enzyme in this species is believed to be ubiquinone. Couples the redox reaction to proton translocation (for every two electrons transferred, four hydrogen ions are translocated across the cytoplasmic membrane), and thus conserves the redox energy in a proton gradient. The sequence is that of NADH-quinone oxidoreductase subunit I from Rickettsia africae (strain ESF-5).